A 153-amino-acid chain; its full sequence is Large ribosomal subunit protein bL9 (153 aa).

The protein belongs to the bacterial ribosomal protein bL9 family.

Functionally, binds to the 23S rRNA. The chain is Large ribosomal subunit protein bL9 from Blochmanniella pennsylvanica (strain BPEN).